We begin with the raw amino-acid sequence, 240 residues long: MTGSHDSDLAREKLIVALDYWNIEDARKLVRDLGDGVSFYKVGLGLQLVGGNEFARELIAEGKRVFLDYKYYDIEETVQRAVAQAAELKIAFLTVHGVTSIMKAAVAGRGNSDMKILGVTVLTSMDAEDIKEMGFECSVEDLVVARARRALEVGVDGVVASALEAAELRKHTNNKLMIVSPGIRPSGGARHDQKRVATPFEAMRAGADYLVLGRPIYAADNPKAAAQAIIREMADALRPD.

Substrate-binding positions include aspartate 19, lysine 41, 68-77, threonine 123, arginine 184, glutamine 193, glycine 213, and arginine 214; that span reads DYKYYDIEET. Lysine 70 (proton donor) is an active-site residue.

It belongs to the OMP decarboxylase family. Type 1 subfamily. As to quaternary structure, homodimer.

The enzyme catalyses orotidine 5'-phosphate + H(+) = UMP + CO2. It participates in pyrimidine metabolism; UMP biosynthesis via de novo pathway; UMP from orotate: step 2/2. Catalyzes the decarboxylation of orotidine 5'-monophosphate (OMP) to uridine 5'-monophosphate (UMP). This chain is Orotidine 5'-phosphate decarboxylase, found in Nitrobacter winogradskyi (strain ATCC 25391 / DSM 10237 / CIP 104748 / NCIMB 11846 / Nb-255).